Reading from the N-terminus, the 173-residue chain is Myosin light chain 5 (173 aa).

Residues 1–20 (MASRKTKKKEGGALRAQRAS) form a disordered region. EF-hand domains follow at residues 30–65 (TQIQ…LGKT), 100–135 (DAEE…QADK), and 136–171 (MTAE…GEEK). Residues aspartate 43, asparagine 45, aspartate 47, and aspartate 54 each contribute to the Ca(2+) site.

Myosin is a hexamer of 2 heavy chains and 4 light chains. In terms of tissue distribution, expressed in fetal skeletal muscle and retina.

This Homo sapiens (Human) protein is Myosin light chain 5 (MYL5).